Reading from the N-terminus, the 412-residue chain is Multifunctional CCA protein (412 aa).

2 residues coordinate ATP: glycine 8 and arginine 11. 2 residues coordinate CTP: glycine 8 and arginine 11. Positions 21 and 23 each coordinate Mg(2+). ATP is bound by residues arginine 91, arginine 138, and arginine 141. CTP contacts are provided by arginine 91, arginine 138, and arginine 141. One can recognise an HD domain in the interval 229–334; it reads RGQHTLLALQ…LELFNQLDVW (106 aa).

It belongs to the tRNA nucleotidyltransferase/poly(A) polymerase family. Bacterial CCA-adding enzyme type 1 subfamily. In terms of assembly, monomer. Can also form homodimers and oligomers. The cofactor is Mg(2+). It depends on Ni(2+) as a cofactor.

It catalyses the reaction a tRNA precursor + 2 CTP + ATP = a tRNA with a 3' CCA end + 3 diphosphate. The catalysed reaction is a tRNA with a 3' CCA end + 2 CTP + ATP = a tRNA with a 3' CCACCA end + 3 diphosphate. Catalyzes the addition and repair of the essential 3'-terminal CCA sequence in tRNAs without using a nucleic acid template. Adds these three nucleotides in the order of C, C, and A to the tRNA nucleotide-73, using CTP and ATP as substrates and producing inorganic pyrophosphate. tRNA 3'-terminal CCA addition is required both for tRNA processing and repair. Also involved in tRNA surveillance by mediating tandem CCA addition to generate a CCACCA at the 3' terminus of unstable tRNAs. While stable tRNAs receive only 3'-terminal CCA, unstable tRNAs are marked with CCACCA and rapidly degraded. The polypeptide is Multifunctional CCA protein (Haemophilus ducreyi (strain 35000HP / ATCC 700724)).